The chain runs to 328 residues: Lipoyl synthase (328 aa).

Residues C56, C61, C67, C82, C86, C89, and S298 each coordinate [4Fe-4S] cluster. Residues 68 to 287 (WEDREATFLI…KEEAEEIGFS (220 aa)) enclose the Radical SAM core domain.

It belongs to the radical SAM superfamily. Lipoyl synthase family. Requires [4Fe-4S] cluster as cofactor.

Its subcellular location is the cytoplasm. It catalyses the reaction [[Fe-S] cluster scaffold protein carrying a second [4Fe-4S](2+) cluster] + N(6)-octanoyl-L-lysyl-[protein] + 2 oxidized [2Fe-2S]-[ferredoxin] + 2 S-adenosyl-L-methionine + 4 H(+) = [[Fe-S] cluster scaffold protein] + N(6)-[(R)-dihydrolipoyl]-L-lysyl-[protein] + 4 Fe(3+) + 2 hydrogen sulfide + 2 5'-deoxyadenosine + 2 L-methionine + 2 reduced [2Fe-2S]-[ferredoxin]. It functions in the pathway protein modification; protein lipoylation via endogenous pathway; protein N(6)-(lipoyl)lysine from octanoyl-[acyl-carrier-protein]: step 2/2. Its function is as follows. Catalyzes the radical-mediated insertion of two sulfur atoms into the C-6 and C-8 positions of the octanoyl moiety bound to the lipoyl domains of lipoate-dependent enzymes, thereby converting the octanoylated domains into lipoylated derivatives. The chain is Lipoyl synthase from Streptomyces avermitilis (strain ATCC 31267 / DSM 46492 / JCM 5070 / NBRC 14893 / NCIMB 12804 / NRRL 8165 / MA-4680).